A 264-amino-acid polypeptide reads, in one-letter code: Thymidylate synthase (264 aa).

DUMP contacts are provided by residues Arg-21 and Arg-126–Arg-127. Cys-146 serves as the catalytic Nucleophile. DUMP-binding positions include Arg-166–Asp-169, Asn-177, and His-207–Tyr-209. Residue Asp-169 participates in (6R)-5,10-methylene-5,6,7,8-tetrahydrofolate binding. (6R)-5,10-methylene-5,6,7,8-tetrahydrofolate is bound at residue Ala-263.

This sequence belongs to the thymidylate synthase family. Bacterial-type ThyA subfamily. In terms of assembly, homodimer.

The protein localises to the cytoplasm. The catalysed reaction is dUMP + (6R)-5,10-methylene-5,6,7,8-tetrahydrofolate = 7,8-dihydrofolate + dTMP. It participates in pyrimidine metabolism; dTTP biosynthesis. Catalyzes the reductive methylation of 2'-deoxyuridine-5'-monophosphate (dUMP) to 2'-deoxythymidine-5'-monophosphate (dTMP) while utilizing 5,10-methylenetetrahydrofolate (mTHF) as the methyl donor and reductant in the reaction, yielding dihydrofolate (DHF) as a by-product. This enzymatic reaction provides an intracellular de novo source of dTMP, an essential precursor for DNA biosynthesis. The polypeptide is Thymidylate synthase (Rhodopseudomonas palustris (strain HaA2)).